Reading from the N-terminus, the 101-residue chain is Small ribosomal subunit protein uS14 (101 aa).

This sequence belongs to the universal ribosomal protein uS14 family. Part of the 30S ribosomal subunit. Contacts proteins S3 and S10.

Binds 16S rRNA, required for the assembly of 30S particles and may also be responsible for determining the conformation of the 16S rRNA at the A site. The polypeptide is Small ribosomal subunit protein uS14 (Shewanella sediminis (strain HAW-EB3)).